Here is a 367-residue protein sequence, read N- to C-terminus: Protein RecA (367 aa).

73-80 (GPESSGKT) lines the ATP pocket. Residues 345-367 (DEPVAKKASAKESKEAKELKEVE) are disordered.

It belongs to the RecA family.

It localises to the cytoplasm. Its function is as follows. Can catalyze the hydrolysis of ATP in the presence of single-stranded DNA, the ATP-dependent uptake of single-stranded DNA by duplex DNA, and the ATP-dependent hybridization of homologous single-stranded DNAs. It interacts with LexA causing its activation and leading to its autocatalytic cleavage. The protein is Protein RecA of Herminiimonas arsenicoxydans.